Consider the following 224-residue polypeptide: Proteasome subunit beta (224 aa).

The propeptide at 1–6 is removed in mature form; by autocatalysis; the sequence is MDVMKG. Thr7 serves as the catalytic Nucleophile.

The protein belongs to the peptidase T1B family. In terms of assembly, the 20S proteasome core is composed of 14 alpha and 14 beta subunits that assemble into four stacked heptameric rings, resulting in a barrel-shaped structure. The two inner rings, each composed of seven catalytic beta subunits, are sandwiched by two outer rings, each composed of seven alpha subunits. The catalytic chamber with the active sites is on the inside of the barrel. Has a gated structure, the ends of the cylinder being occluded by the N-termini of the alpha-subunits. Is capped at one or both ends by the proteasome regulatory ATPase, PAN.

It is found in the cytoplasm. It carries out the reaction Cleavage of peptide bonds with very broad specificity.. With respect to regulation, the formation of the proteasomal ATPase PAN-20S proteasome complex, via the docking of the C-termini of PAN into the intersubunit pockets in the alpha-rings, triggers opening of the gate for substrate entry. Interconversion between the open-gate and close-gate conformations leads to a dynamic regulation of the 20S proteasome proteolysis activity. Its function is as follows. Component of the proteasome core, a large protease complex with broad specificity involved in protein degradation. This is Proteasome subunit beta from Methanocaldococcus sp. (strain FS406-22).